The chain runs to 271 residues: Extent of cell elongation protein 1 (271 aa).

Positions 1–18 are cleaved as a signal peptide; that stretch reads MKFSKIACATVFALSSQA. Residues 62 to 82 form a helical membrane-spanning segment; it reads SIIGIIMGILGNIPQVIQIIM.

In terms of assembly, polymerizes in solution to form membrane pores. Post-translationally, cleavage by KEX2 generates 8 peptides ECE1-I to ECE1-VIII, all terminating in Lys-Arg. Only peptide ECE1-III, called candidalysin, shows toxin activity.

It is found in the secreted. It localises to the host cell membrane. In terms of biological role, secreted protein cleaved by KEX2 in 8 similar peptides (ECE1-I to ECE1-VIII). Stimulates biofilm formation. Functionally, acts as a cytolytic peptide toxin that directly damages host epithelial membranes, triggers a danger response signaling pathway and activates epithelial immunity. Polymerizes in solution to form membrane pores to damage epithelial cells. Induces calcium influx, oxidative stress, mitochondrial dysfunction and ATP depletion in host cells, leading to epithelial necrosis. Serves as a danger signal that potentiates the immune response, and more specifically IL-17 response. Induces cytokine/chemokine secretion by host (especially CCL2/3/4, CXCL1 and S100A8), neutrophil recruitment, and promotes mortality in zebrafish and murine models of systemic fungal infection. Mediates distinct epithelial inflammatory responses through p38, EGFR-ERK and TREM-1/DAP12 pathways. Acts as one of the hypha-derived drivers of NLRP3 inflammasome responses in primary macrophages and thus contributes to the capacity to induce maturation and secretion of IL-1beta from primary macrophages. Stimulates mast cells by mediating cross-talk between signaling pathways activated by the dectin-1 receptor and MAPKs. Enables escape via the gasdermin-mediated pyroptosis, as well as a cell lysis pathway associated with macrophage extracellular trap formation termed ETosis. Acts as the main hemolytic factor of C.albicans. As an exotoxine, also promotes alcohol-associated liver disease or oral carcinogenesis. The polypeptide is Extent of cell elongation protein 1 (Candida albicans (strain SC5314 / ATCC MYA-2876) (Yeast)).